The sequence spans 396 residues: MVRVVMTYADRWLLPEGVEEILPGEAKAIDSLRRKLLDLYSAWGYDMVIPPLLEYTDSLLTGSGRDIDLLTLKVTDQLSGRTLGIRADITPQTARMDAHSFNRQGANRLCYAGHVVHARPKNPLATRTPIQAGIEFYGEADLAADIEVVSLLLESLQVAGLPRLHIDLGHVGIYRAIANDAGLTTAQEQEFFELLQRKAVTEIHAWVEANIPSADKAAAFILLPSLAGGIEVLDRARSQFAHLPQVIDALDHLQQLAAVVMARYPSAELYFDLGEVRGYHYLTGIVFAAFAPGYGNPIASGGRYDHIGEVFGRARPATGFAVDITALSKLGFIGQHDVSAIAVEVNQDPQQWAAIKALRARGERVIQLTPAGQLAELKCDRQLLLLDGKYQVVPLQ.

This sequence belongs to the class-II aminoacyl-tRNA synthetase family. HisZ subfamily. In terms of assembly, heteromultimer composed of HisG and HisZ subunits.

The protein localises to the cytoplasm. Its pathway is amino-acid biosynthesis; L-histidine biosynthesis; L-histidine from 5-phospho-alpha-D-ribose 1-diphosphate: step 1/9. In terms of biological role, required for the first step of histidine biosynthesis. May allow the feedback regulation of ATP phosphoribosyltransferase activity by histidine. The protein is ATP phosphoribosyltransferase regulatory subunit of Cellvibrio japonicus (strain Ueda107) (Pseudomonas fluorescens subsp. cellulosa).